The following is a 72-amino-acid chain: Hypertrehalosaemic prohormone (72 aa).

Positions 1–21 (MNHLVKVLIVVVAIALVLCEA) are cleaved as a signal peptide. Pyrrolidone carboxylic acid is present on Gln-22. The residue at position 31 (Thr-31) is a Threonine amide.

This sequence belongs to the AKH/HRTH/RPCH family. As to expression, expressed in corpora cardiaca.

The protein resides in the secreted. Its function is as follows. Hypertrehalosaemic factors are neuropeptides that elevate the level of trehalose in the hemolymph (trehalose is the major carbohydrate in the hemolymph of insects). In Blaberus discoidalis (Tropical cockroach), this protein is Hypertrehalosaemic prohormone.